A 183-amino-acid chain; its full sequence is Ribosome-recycling factor (183 aa).

It belongs to the RRF family.

The protein localises to the cytoplasm. Functionally, responsible for the release of ribosomes from messenger RNA at the termination of protein biosynthesis. May increase the efficiency of translation by recycling ribosomes from one round of translation to another. In Clostridium tetani (strain Massachusetts / E88), this protein is Ribosome-recycling factor.